Consider the following 394-residue polypeptide: Muscle cell intermediate filament protein AV71 (394 aa).

Residues 1 to 73 form a coil 1B region; that stretch reads AEINLVRRRV…RVHDQEITEL (73 aa). The 239-residue stretch at 1–239 folds into the IF rod domain; it reads AEINLVRRRV…KMLEGEENRA (239 aa). The tract at residues 74–91 is linker 12; it reads QAMAARDTTPENREYFKN. Residues 92–239 are coil 2; the sequence is ELSSAIRDIR…KMLEGEENRA (148 aa). The interval 240–394 is tail; that stretch reads GLRQLVEQVV…HIQRSSHTIN (155 aa). Residues 272–389 enclose the LTD domain; the sequence is SRTSFQRSAK…EERASHIQRS (118 aa).

Belongs to the intermediate filament family.

In Acanthocheilonema viteae (Filarial nematode worm), this protein is Muscle cell intermediate filament protein AV71 (AV71).